Here is a 278-residue protein sequence, read N- to C-terminus: HTH-type transcriptional activator RhaS (278 aa).

An HTH araC/xylS-type domain is found at 174-272 (NLLLAWLEDH…NWSPRDIRQG (99 aa)). 2 consecutive DNA-binding regions (H-T-H motif) follow at residues 191–212 (DAVADQFSLSLRTLHRQLKQQT) and 239–262 (VTDIAYRCGFSDSNHFSTLFRREF).

Binds DNA as a dimer.

Its subcellular location is the cytoplasm. In terms of biological role, activates expression of the rhaBAD and rhaT operons. The chain is HTH-type transcriptional activator RhaS from Escherichia coli O127:H6 (strain E2348/69 / EPEC).